The sequence spans 64 residues: Small ribosomal subunit protein bS21 (64 aa).

The protein belongs to the bacterial ribosomal protein bS21 family.

This chain is Small ribosomal subunit protein bS21, found in Sulfurihydrogenibium sp. (strain YO3AOP1).